We begin with the raw amino-acid sequence, 433 residues long: tRNA-2-methylthio-N(6)-dimethylallyladenosine synthase (433 aa).

Residues 4–119 (KKLFIQTLGC…ITQAIKTPKF (116 aa)) enclose the MTTase N-terminal domain. Residues Cys-13, Cys-50, Cys-82, Cys-151, Cys-155, and Cys-158 each contribute to the [4Fe-4S] cluster site. Residues 137–370 (RNSIYKSYIN…QNRHSEILDE (234 aa)) form the Radical SAM core domain. One can recognise a TRAM domain in the interval 373-433 (KKQENKTFKV…KRMVLYGEII (61 aa)).

This sequence belongs to the methylthiotransferase family. MiaB subfamily. Monomer. [4Fe-4S] cluster serves as cofactor.

Its subcellular location is the cytoplasm. It carries out the reaction N(6)-dimethylallyladenosine(37) in tRNA + (sulfur carrier)-SH + AH2 + 2 S-adenosyl-L-methionine = 2-methylsulfanyl-N(6)-dimethylallyladenosine(37) in tRNA + (sulfur carrier)-H + 5'-deoxyadenosine + L-methionine + A + S-adenosyl-L-homocysteine + 2 H(+). Functionally, catalyzes the methylthiolation of N6-(dimethylallyl)adenosine (i(6)A), leading to the formation of 2-methylthio-N6-(dimethylallyl)adenosine (ms(2)i(6)A) at position 37 in tRNAs that read codons beginning with uridine. In Campylobacter jejuni subsp. doylei (strain ATCC BAA-1458 / RM4099 / 269.97), this protein is tRNA-2-methylthio-N(6)-dimethylallyladenosine synthase.